Reading from the N-terminus, the 114-residue chain is uncharacterized protein (114 aa).

This sequence to E.coli YggL.

This is an uncharacterized protein from Haemophilus influenzae (strain ATCC 51907 / DSM 11121 / KW20 / Rd).